The sequence spans 1548 residues: Lysine-specific demethylase 5D (1548 aa).

One can recognise a JmjN domain in the interval 14 to 55 (CPVFEPSWAEFRDPLGYIAKIRPIAEKSGICKIRPPADWQPP). The ARID domain maps to 79 to 169 (TRVKLNYLDQ…IIYPYEIFQS (91 aa)). Glycyl lysine isopeptide (Lys-Gly) (interchain with G-Cter in SUMO2) cross-links involve residues Lys-205, Lys-229, Lys-244, and Lys-279. The interval 208–229 (CYSRRGKRLQPEPEPTEEDIEK) is disordered. Phosphoserine occurs at positions 300 and 316. The PHD-type 1 zinc finger occupies 325–371 (VCRICSRGDEVDKFLLCDGCSDNYHIFCLLPPLSEVPKGVWRCPKCI). Residue Tyr-439 coordinates 2-oxoglutarate. In terms of domain architecture, JmjC spans 467 to 633 (EYAACGWNLN…VGRQCIEHYR (167 aa)). Residues His-513 and Glu-515 each contribute to the Fe cation site. Positions 521, 523, and 531 each coordinate 2-oxoglutarate. His-601 is a Fe cation binding site. The C5HC2 zinc-finger motif lies at 706 to 758 (CIKCKTTCFLSALACYDCPDSLVCLSHINDLCKCSRNRQYLRYRYTLDELPAM). Phosphoserine occurs at positions 889 and 893. Lys-1123 is covalently cross-linked (Glycyl lysine isopeptide (Lys-Gly) (interchain with G-Cter in SUMO2)). A PHD-type 2 zinc finger spans residues 1182–1243 (ICICGQVCAG…DTKFLCPLCM (62 aa)). Ser-1355 is modified (phosphoserine). Residues 1438 to 1468 (KPENPGNWSEEQTPERRRQRRQKVVLSRKGE) form a disordered region.

Belongs to the JARID1 histone demethylase family. As to quaternary structure, interacts withPCGF6, MSH5, ZMYND8, AR. L-ascorbate serves as cofactor. The cofactor is Fe(2+).

It is found in the nucleus. It carries out the reaction N(6),N(6),N(6)-trimethyl-L-lysyl(4)-[histone H3] + 3 2-oxoglutarate + 3 O2 = L-lysyl(4)-[histone H3] + 3 formaldehyde + 3 succinate + 3 CO2. Its function is as follows. Histone demethylase that specifically demethylates 'Lys-4' of histone H3, thereby playing a central role in histone code. Does not demethylate histone H3 'Lys-9', H3 'Lys-27', H3 'Lys-36', H3 'Lys-79' or H4 'Lys-20'. Demethylates trimethylated and dimethylated but not monomethylated H3 'Lys-4'. May play a role in spermatogenesis. Involved in transcriptional repression of diverse metastasis-associated genes; in this function seems to cooperate with ZMYND8. Suppresses prostate cancer cell invasion. Regulates androgen receptor (AR) transcriptional activity by demethylating H3K4me3 active transcription marks. This is Lysine-specific demethylase 5D (Kdm5d) from Mus musculus (Mouse).